We begin with the raw amino-acid sequence, 521 residues long: Occludin (521 aa).

The Cytoplasmic portion of the chain corresponds to 1-66; the sequence is MSSRPFESPP…KWTSPPGVIR (66 aa). One can recognise an MARVEL domain in the interval 60-268; sequence SPPGVIRILS…IIFFAVKTRR (209 aa). The chain crosses the membrane as a helical span at residues 67–89; that stretch reads ILSMLVIVMCIAIFGCVASTLAW. Topologically, residues 90–134 are extracellular; the sequence is DRGYGTGLMGGSIGYPYGSGFGSYGTGYGYGFGYGYGYGGYTDPR. A helical membrane pass occupies residues 135–159; the sequence is AAKGFLLAMVAFCFIAALVIFVTSV. Residues 160–169 are Cytoplasmic-facing; it reads IRSDISRTRR. A helical transmembrane segment spans residues 170–194; sequence YYLTVIILSAFLGVMMFIATIVYIM. Topologically, residues 195 to 242 are extracellular; the sequence is GVNPTAQASGSLYSSQIYAMCNQFYASTATGLYMDQYLYHYCVVDPQE. Cysteine 215 and cysteine 236 are disulfide-bonded. Residues 243–264 traverse the membrane as a helical segment; that stretch reads AIAIVLGFMVIVAFALIIFFAV. Residues 265 to 521 lie on the Cytoplasmic side of the membrane; the sequence is KTRRKMDRYD…MVGDYDRQKT (257 aa). A Phosphoserine modification is found at serine 301. Residues 301–407 form a disordered region; that stretch reads SAGTQDMPPP…ETDYTTGGES (107 aa). At threonine 304 the chain carries Phosphothreonine. Serine 312, serine 320, and serine 339 each carry phosphoserine. Tyrosine 367 is modified (phosphotyrosine). Residues serine 368 and serine 369 each carry the phosphoserine modification. A compositionally biased stretch (basic residues) spans 380–389; the sequence is APSKGRTGRP. The segment covering 390–399 has biased composition (basic and acidic residues); sequence KRLEQDHYET. A phosphotyrosine mark is found at tyrosine 397 and tyrosine 401. Threonine 402 and threonine 403 each carry phosphothreonine; by PKC/PRKCH. Phosphoserine is present on serine 407. An OCEL domain is found at 413–521; it reads EDWIREYPPI…MVGDYDRQKT (109 aa). The stretch at 424–488 forms a coiled coil; it reads SDQQRQLYKR…EYNRLKQVKG (65 aa). A Phosphoserine modification is found at serine 489.

This sequence belongs to the ELL/occludin family. As to quaternary structure, interacts with TJP1/ZO1. Interacts with VAPA. Interacts with CLDN1, CLDN6, CLDN9, CLDN11, CLDN12 and CLDN17. Interacts with PLSCR1. Interacts with LSR, ILDR1 and ILDR2. Interacts with TJP2/ZO2. In terms of processing, dephosphorylated by PTPRJ. Less-phosphorylated forms are found in basolateral membrane, cytosol and tight junction. More-heavily phosphorylated forms are concentrated exclusively in tight junction. As to expression, localized at tight junctions of both epithelial and endothelial cells.

The protein resides in the cell membrane. Its subcellular location is the cell junction. It is found in the tight junction. May play a role in the formation and regulation of the tight junction (TJ) paracellular permeability barrier. Interacts with ZO-1. The protein is Occludin (OCLN) of Canis lupus familiaris (Dog).